The following is a 308-amino-acid chain: Elongation factor Ts (308 aa).

Residues Thr-80 to Val-83 are involved in Mg(2+) ion dislocation from EF-Tu.

This sequence belongs to the EF-Ts family.

It localises to the cytoplasm. Its function is as follows. Associates with the EF-Tu.GDP complex and induces the exchange of GDP to GTP. It remains bound to the aminoacyl-tRNA.EF-Tu.GTP complex up to the GTP hydrolysis stage on the ribosome. The polypeptide is Elongation factor Ts (Rhizobium johnstonii (strain DSM 114642 / LMG 32736 / 3841) (Rhizobium leguminosarum bv. viciae)).